Reading from the N-terminus, the 181-residue chain is ATP-dependent protease subunit HslV (181 aa).

T11 is an active-site residue. Na(+)-binding residues include A166, C169, and T172.

It belongs to the peptidase T1B family. HslV subfamily. In terms of assembly, a double ring-shaped homohexamer of HslV is capped on each side by a ring-shaped HslU homohexamer. The assembly of the HslU/HslV complex is dependent on binding of ATP.

It is found in the cytoplasm. It catalyses the reaction ATP-dependent cleavage of peptide bonds with broad specificity.. Its activity is regulated as follows. Allosterically activated by HslU binding. In terms of biological role, protease subunit of a proteasome-like degradation complex believed to be a general protein degrading machinery. The protein is ATP-dependent protease subunit HslV of Chlorobaculum parvum (strain DSM 263 / NCIMB 8327) (Chlorobium vibrioforme subsp. thiosulfatophilum).